Consider the following 149-residue polypeptide: MQVILLDKVANLGSLGDQVNVKAGYARNFLVPMGKAVPATKKNVEFFEARRADLEAKLAETLSAAEARAVKINELATVTIASKAGDEGKLFGSIGTRDIADAVTAAGVAVTKSEVRLPNGVLRTLGDHEVHFQVHSDVFAQLNVVVVAE.

The protein belongs to the bacterial ribosomal protein bL9 family.

Its function is as follows. Binds to the 23S rRNA. This Edwardsiella ictaluri (strain 93-146) protein is Large ribosomal subunit protein bL9.